The sequence spans 223 residues: Cytotoxic T-lymphocyte protein 4 (223 aa).

An N-terminal signal peptide occupies residues M1–S35. The Extracellular portion of the chain corresponds to K36–D161. An Ig-like V-type domain is found at H39–Y140. The homodimerization stretch occupies residues V46–S50. 2 disulfide bridges follow: C58-C129 and C85-C103. N113 is a glycosylation site (N-linked (GlcNAc...) asparagine). The segment at M134–Y139 is important for interaction with CD80 and CD86. A glycan (N-linked (GlcNAc...) asparagine) is linked at N145. Positions Y150 to E155 are homodimerization. A helical transmembrane segment spans residues F162 to T182. The Cytoplasmic portion of the chain corresponds to A183 to N223. A Phosphotyrosine; by TXK and JAK2 modification is found at Y201.

In terms of assembly, homodimer; disulfide-linked. Binds to CD80/B7-1 and CD86/B7.2. Interacts with ICOSLG. N-glycosylation is important for dimerization. Post-translationally, phosphorylation at Tyr-201 prevents binding to the AP-2 adapter complex, blocks endocytosis, and leads to retention of CTLA4 on the cell surface.

It is found in the cell membrane. Functionally, inhibitory receptor acting as a major negative regulator of T-cell responses. The affinity of CTLA4 for its natural B7 family ligands, CD80 and CD86, is considerably stronger than the affinity of their cognate stimulatory coreceptor CD28. This Canis lupus familiaris (Dog) protein is Cytotoxic T-lymphocyte protein 4 (CTLA4).